A 565-amino-acid polypeptide reads, in one-letter code: uncharacterized protein (565 aa).

A run of 10 helical transmembrane segments spans residues 28–48 (IFHFYIYCILLGAVLLFLPFA), 73–93 (ASYGFLDALFLAVSAFSDTGL), 109–129 (VLAILLQLGGIGFVVIAFLVW), 169–189 (LFLFMVELLYGFLYTILFYFI), 262–282 (IVIQWLAISQIIFGGIGYPVL), 315–335 (LIVTAWCFLMLLMVEFIVITS), 364–384 (SLIFGPIPAASRVMQLWFGVI), 393–413 (VFPWSAESDIIKGIMVIAMFI), 461–481 (AFLVAVFGLVSVVLIAILLPL), and 526–546 (TLGLLMIMGQVGVSSSVLTFV).

It belongs to the TrkH potassium transport family.

It localises to the cell membrane. This is an uncharacterized protein from Mycoplasma pneumoniae (strain ATCC 29342 / M129 / Subtype 1) (Mycoplasmoides pneumoniae).